Reading from the N-terminus, the 43-residue chain is Cytochrome b559 subunit beta (43 aa).

Residues 18–34 form a helical membrane-spanning segment; sequence WLAVHTLAIPTVFFLGA. A heme-binding site is contributed by H22.

Belongs to the PsbE/PsbF family. In terms of assembly, heterodimer of an alpha subunit and a beta subunit. PSII is composed of 1 copy each of membrane proteins PsbA, PsbB, PsbC, PsbD, PsbE, PsbF, PsbH, PsbI, PsbJ, PsbK, PsbL, PsbM, PsbT, PsbX, PsbY, PsbZ, Psb30/Ycf12, peripheral proteins PsbO, CyanoQ (PsbQ), PsbU, PsbV and a large number of cofactors. It forms dimeric complexes. Heme b serves as cofactor.

Its subcellular location is the cellular thylakoid membrane. Functionally, this b-type cytochrome is tightly associated with the reaction center of photosystem II (PSII). PSII is a light-driven water:plastoquinone oxidoreductase that uses light energy to abstract electrons from H(2)O, generating O(2) and a proton gradient subsequently used for ATP formation. It consists of a core antenna complex that captures photons, and an electron transfer chain that converts photonic excitation into a charge separation. The chain is Cytochrome b559 subunit beta from Synechococcus sp. (strain JA-2-3B'a(2-13)) (Cyanobacteria bacterium Yellowstone B-Prime).